A 269-amino-acid polypeptide reads, in one-letter code: Hydroxyethylthiazole kinase (269 aa).

Residue methionine 46 participates in substrate binding. The ATP site is built by arginine 122 and threonine 168. Residue glycine 195 participates in substrate binding.

Belongs to the Thz kinase family. Mg(2+) is required as a cofactor.

The enzyme catalyses 5-(2-hydroxyethyl)-4-methylthiazole + ATP = 4-methyl-5-(2-phosphooxyethyl)-thiazole + ADP + H(+). Its pathway is cofactor biosynthesis; thiamine diphosphate biosynthesis; 4-methyl-5-(2-phosphoethyl)-thiazole from 5-(2-hydroxyethyl)-4-methylthiazole: step 1/1. Functionally, catalyzes the phosphorylation of the hydroxyl group of 4-methyl-5-beta-hydroxyethylthiazole (THZ). The protein is Hydroxyethylthiazole kinase of Geobacillus kaustophilus (strain HTA426).